A 186-amino-acid polypeptide reads, in one-letter code: TATA-box-binding protein B (186 aa).

2 tandem repeats follow at residues 10 to 86 (IENV…FGDI) and 101 to 179 (VQNI…QDRL).

It belongs to the TBP family.

Its function is as follows. General factor that plays a role in the activation of archaeal genes transcribed by RNA polymerase. Binds specifically to the TATA box promoter element which lies close to the position of transcription initiation. This is TATA-box-binding protein B (tbpB1) from Halobacterium salinarum (strain ATCC 700922 / JCM 11081 / NRC-1) (Halobacterium halobium).